The primary structure comprises 56 residues: UPF0391 membrane protein Rru_A0119 (56 aa).

Transmembrane regions (helical) follow at residues 4–24 (WALI…GGIA) and 30–50 (IAQI…IMHF).

This sequence belongs to the UPF0391 family.

The protein resides in the cell membrane. The chain is UPF0391 membrane protein Rru_A0119 from Rhodospirillum rubrum (strain ATCC 11170 / ATH 1.1.1 / DSM 467 / LMG 4362 / NCIMB 8255 / S1).